The sequence spans 396 residues: MAKKVVTDLDLKDKKVLVRVDFNVPMKDGKITNDNRIVAALPTIEYILEQNGKAILFSHLGKVKTEEDKEGKSLRPVAARLSELLGKEVKFVPTTRGPELEKAIDELKDGEVLLFENTRFEDIDGKKESKNDPELGKYWASLGDVFVNDAFGTAHRAHASNVGIASNLESAAGFLMEKEIKFIGGVVDNPARPLVAILGGAKVSDKIGVIENLLTKADKVLVGGGMTFTFMAAQGQEIGKSLLEADKVELAKGLLEKAGNKLVLPVDAVVSKEFSNDAPFHTVSADSIPADEMGLDIGQATIDLFTKELQGAKTVVWNGPMGVFELSNFAKGTIGVCEAIANLTDATTIIGGGDSAAAAMDLGFADKFTHISTGGGASLEYLEGKELPGVASISDK.

Substrate contacts are provided by residues 21–23 (DFN), arginine 36, 59–62 (HLGK), arginine 119, and arginine 156. ATP-binding positions include lysine 206, glycine 294, glutamate 325, and 352 to 355 (GGDS).

The protein belongs to the phosphoglycerate kinase family. As to quaternary structure, monomer.

The protein resides in the cytoplasm. It carries out the reaction (2R)-3-phosphoglycerate + ATP = (2R)-3-phospho-glyceroyl phosphate + ADP. Its pathway is carbohydrate degradation; glycolysis; pyruvate from D-glyceraldehyde 3-phosphate: step 2/5. The sequence is that of Phosphoglycerate kinase from Listeria monocytogenes serotype 4b (strain CLIP80459).